Reading from the N-terminus, the 258-residue chain is Transcription factor RSL3 (258 aa).

The D-box motif lies at 98–105 (RKLLDVEN). The tract at residues 119–178 (ELAKSKKKQRVSSESNTVDESNTNWVDGQSLSNSSDDEKASVTSVKGKTRATKGTATDPQ) is disordered. Residues 130 to 152 (SSESNTVDESNTNWVDGQSLSNS) are compositionally biased toward polar residues. The basic motif stretch occupies residues 173-186 (TATDPQSLYARKRR). A bHLH domain is found at 173–222 (TATDPQSLYARKRREKINERLKTLQNLVPNGTKVDISTMLEEAVHYVKFL). The tract at residues 187–222 (EKINERLKTLQNLVPNGTKVDISTMLEEAVHYVKFL) is helix-loop-helix motif.

Homodimer. In terms of processing, ubiquitinated. Ubiquitination leads to its subsequent degradation by the 26S proteasome. As to expression, expressed constitutively in roots, leaves, and flowers. Expressed in root epidermal hair cells.

The protein localises to the nucleus. Its function is as follows. Transcription factor involved in the regulation of root hair elongation. Is sufficient to promote postmitotic cell growth in root-hair cells and is a direct transcriptional target of RHD6 and RSL1. Involved in the regulation of root hair elongation in response to low phosphate. Controls root hair cell growth by regulating the expression of genes encoding proteins involved in cell signaling, cell wall modification and secretion. In Arabidopsis thaliana (Mouse-ear cress), this protein is Transcription factor RSL3.